The sequence spans 308 residues: Ribosomal RNA large subunit methyltransferase F (308 aa).

It belongs to the methyltransferase superfamily. METTL16/RlmF family.

It is found in the cytoplasm. The enzyme catalyses adenosine(1618) in 23S rRNA + S-adenosyl-L-methionine = N(6)-methyladenosine(1618) in 23S rRNA + S-adenosyl-L-homocysteine + H(+). Specifically methylates the adenine in position 1618 of 23S rRNA. The protein is Ribosomal RNA large subunit methyltransferase F of Escherichia coli (strain K12 / MC4100 / BW2952).